The primary structure comprises 352 residues: MKKIVFTGGGTVGHVTLNLLLMPKFIEDGWEVHYIGDKRGIEHQEILKSGLDVTFHSIATGKLRRYFSWQNMLDVFKVGWGIVQSLFIMLRLRPQTLFSKGGFVSVPPVIAARVSGVPVFIHESDLSMGLANKIAYKFATKMYSTFEQASSLSKVEHVGAVTKVSDQKNPEPDELVDIQTHFNHKLPTVLFVGGSAGARVFNQLVTDHKKELTERYNIINLTGDSSLNELSQNLFRVDYVTDLYQPLMELADIVVTRGGANTIFELLAIAKLHVIVPLGREASRGDQIENAAYFVKKGYAEDLQESDLTLDSLEEKLSHLLSHKEDYQAKMKASKELKSLADFYQLLKKDLS.

2 residues coordinate UDP-N-acetyl-alpha-D-glucosamine: Ser-195 and Gln-287.

It belongs to the glycosyltransferase 28 family. MurG subfamily.

Its subcellular location is the cell membrane. The catalysed reaction is Mur2Ac(oyl-L-Ala-gamma-D-Glu-L-Lys-D-Ala-D-Ala)-di-trans,octa-cis-undecaprenyl diphosphate + UDP-N-acetyl-alpha-D-glucosamine = beta-D-GlcNAc-(1-&gt;4)-Mur2Ac(oyl-L-Ala-gamma-D-Glu-L-Lys-D-Ala-D-Ala)-di-trans,octa-cis-undecaprenyl diphosphate + UDP + H(+). It participates in cell wall biogenesis; peptidoglycan biosynthesis. In terms of biological role, cell wall formation. Catalyzes the transfer of a GlcNAc subunit on undecaprenyl-pyrophosphoryl-MurNAc-pentapeptide (lipid intermediate I) to form undecaprenyl-pyrophosphoryl-MurNAc-(pentapeptide)GlcNAc (lipid intermediate II). In Streptococcus pneumoniae (strain ATCC BAA-255 / R6), this protein is UDP-N-acetylglucosamine--N-acetylmuramyl-(pentapeptide) pyrophosphoryl-undecaprenol N-acetylglucosamine transferase.